Consider the following 90-residue polypeptide: Small ribosomal subunit protein bS20 (90 aa).

The protein belongs to the bacterial ribosomal protein bS20 family.

Binds directly to 16S ribosomal RNA. The chain is Small ribosomal subunit protein bS20 from Francisella tularensis subsp. holarctica (strain FTNF002-00 / FTA).